A 201-amino-acid chain; its full sequence is MALHDENVVWHSHPVTVQQRELHHGHRGVVLWFTGLSGSGKSTVAGALEEALHKLGVSTYLLDGDNVRHGLCSDLGFSDADRKENIRRVGEVANLMVEAGLVVLTAFISPHRAERQMVRERVGEGRFIEVFVDTPLAICEARDPKGLYKKARAGELRNFTGIDSVYEAPESAEIHLNGEQLVTNLVQQLLDLLRQNDIIRS.

35–42 provides a ligand contact to ATP; that stretch reads GLSGSGKS. The active-site Phosphoserine intermediate is the Ser-109.

The protein belongs to the APS kinase family.

It carries out the reaction adenosine 5'-phosphosulfate + ATP = 3'-phosphoadenylyl sulfate + ADP + H(+). The protein operates within sulfur metabolism; hydrogen sulfide biosynthesis; sulfite from sulfate: step 2/3. Its function is as follows. Catalyzes the synthesis of activated sulfate. This Escherichia coli O139:H28 (strain E24377A / ETEC) protein is Adenylyl-sulfate kinase.